The following is a 398-amino-acid chain: Acetate kinase (398 aa).

Asn8 serves as a coordination point for Mg(2+). ATP is bound at residue Lys15. A substrate-binding site is contributed by Arg89. Asp146 (proton donor/acceptor) is an active-site residue. ATP-binding positions include 206–210 (HIGNG), 283–285 (DMR), and 331–335 (GMGEN). Glu383 contributes to the Mg(2+) binding site.

This sequence belongs to the acetokinase family. In terms of assembly, homodimer. It depends on Mg(2+) as a cofactor. Mn(2+) serves as cofactor.

The protein resides in the cytoplasm. It catalyses the reaction acetate + ATP = acetyl phosphate + ADP. The protein operates within metabolic intermediate biosynthesis; acetyl-CoA biosynthesis; acetyl-CoA from acetate: step 1/2. In terms of biological role, catalyzes the formation of acetyl phosphate from acetate and ATP. Can also catalyze the reverse reaction. The protein is Acetate kinase of Streptococcus pyogenes serotype M2 (strain MGAS10270).